A 115-amino-acid polypeptide reads, in one-letter code: Large ribosomal subunit protein bL19 (115 aa).

Belongs to the bacterial ribosomal protein bL19 family.

This protein is located at the 30S-50S ribosomal subunit interface and may play a role in the structure and function of the aminoacyl-tRNA binding site. This is Large ribosomal subunit protein bL19 from Koribacter versatilis (strain Ellin345).